Reading from the N-terminus, the 211-residue chain is Urease accessory protein UreF (211 aa).

The protein belongs to the UreF family. As to quaternary structure, ureD, UreF and UreG form a complex that acts as a GTP-hydrolysis-dependent molecular chaperone, activating the urease apoprotein by helping to assemble the nickel containing metallocenter of UreC. The UreE protein probably delivers the nickel.

It is found in the cytoplasm. Its function is as follows. Required for maturation of urease via the functional incorporation of the urease nickel metallocenter. In Mycobacterium sp. (strain JLS), this protein is Urease accessory protein UreF.